Reading from the N-terminus, the 158-residue chain is Protein Smg homolog (158 aa).

It belongs to the Smg family.

The sequence is that of Protein Smg homolog from Vibrio cholerae serotype O1 (strain ATCC 39315 / El Tor Inaba N16961).